We begin with the raw amino-acid sequence, 212 residues long: MTSIADIRTDYARASLDIADVDPNPLRQFRRWFDEAIRAEVAEVNAMTLATVDPQGQPSARIVLLKNLDERGFTFFTNYCSHKGEELAANPHAALLFHWIGLERQVRVQGVVEKVSEAESDAYYHSRPLGSRLGAWASEQSSEVPDRAVLEAREAEYRERFGDAPPRPPHWGGYRLLPERIEFWQGRPSRLHDRLEYRRQPDGGWHIVRLAP.

Substrate contacts are provided by residues 8-11 (RTDY) and Lys-66. FMN-binding positions include 61-66 (RIVLLK), 76-77 (FT), Lys-83, and Gln-105. 3 residues coordinate substrate: Tyr-123, Arg-127, and Ser-131. Residues 140–141 (QS) and Trp-184 contribute to the FMN site. Residue 190-192 (RLH) coordinates substrate. FMN is bound at residue Arg-194.

This sequence belongs to the pyridoxamine 5'-phosphate oxidase family. In terms of assembly, homodimer. Requires FMN as cofactor.

The enzyme catalyses pyridoxamine 5'-phosphate + O2 + H2O = pyridoxal 5'-phosphate + H2O2 + NH4(+). It catalyses the reaction pyridoxine 5'-phosphate + O2 = pyridoxal 5'-phosphate + H2O2. Its pathway is cofactor metabolism; pyridoxal 5'-phosphate salvage; pyridoxal 5'-phosphate from pyridoxamine 5'-phosphate: step 1/1. It functions in the pathway cofactor metabolism; pyridoxal 5'-phosphate salvage; pyridoxal 5'-phosphate from pyridoxine 5'-phosphate: step 1/1. Its function is as follows. Catalyzes the oxidation of either pyridoxine 5'-phosphate (PNP) or pyridoxamine 5'-phosphate (PMP) into pyridoxal 5'-phosphate (PLP). The protein is Pyridoxine/pyridoxamine 5'-phosphate oxidase 1 of Ralstonia nicotianae (strain ATCC BAA-1114 / GMI1000) (Ralstonia solanacearum).